The primary structure comprises 106 residues: Small ribosomal subunit protein uS10 (106 aa).

This sequence belongs to the universal ribosomal protein uS10 family. In terms of assembly, part of the 30S ribosomal subunit.

Functionally, involved in the binding of tRNA to the ribosomes. The polypeptide is Small ribosomal subunit protein uS10 (Wolbachia pipientis subsp. Culex pipiens (strain wPip)).